The sequence spans 210 residues: Small ribosomal subunit protein uS4 (210 aa).

The 61-residue stretch at 100–160 folds into the S4 RNA-binding domain; that stretch reads GRLDNVVYRM…EKSKNQLRVK (61 aa).

It belongs to the universal ribosomal protein uS4 family. As to quaternary structure, part of the 30S ribosomal subunit. Contacts protein S5. The interaction surface between S4 and S5 is involved in control of translational fidelity.

In terms of biological role, one of the primary rRNA binding proteins, it binds directly to 16S rRNA where it nucleates assembly of the body of the 30S subunit. With S5 and S12 plays an important role in translational accuracy. The sequence is that of Small ribosomal subunit protein uS4 from Alcanivorax borkumensis (strain ATCC 700651 / DSM 11573 / NCIMB 13689 / SK2).